The primary structure comprises 279 residues: MAIEFTKYHGLGNDFILIDNRASKTPAITPEKAVEMCDRHFGIGADGVIFALPGENGTDYTMRIFNSDGSEPEMCGNGIRCLAAFLADLEGLSRNKDTYRIHTLAGVITPQLTPDGQIKVDMGLPRLLAGEIPTTLGAADGKVINQPLEVEGQTWEVTCVSMGNPHCITFVEDVAAIPLEIIGPKFEHHPAFPQRTNTEFIQVVSRDYLKMRVWERGAGITLACGTGACASLVAAVLTGRSDRLATVELPGGPLEIEWSEVDQRIYMTGPADRVFTGKL.

Residues Asn13 and Asn66 each coordinate substrate. The Proton donor role is filled by Cys75. Substrate is bound by residues 76–77 (GN), Asn164, Asn197, and 215–216 (ER). Cys224 acts as the Proton acceptor in catalysis. Position 225-226 (225-226 (GT)) interacts with substrate.

This sequence belongs to the diaminopimelate epimerase family. In terms of assembly, homodimer.

The protein localises to the cytoplasm. It catalyses the reaction (2S,6S)-2,6-diaminopimelate = meso-2,6-diaminopimelate. The protein operates within amino-acid biosynthesis; L-lysine biosynthesis via DAP pathway; DL-2,6-diaminopimelate from LL-2,6-diaminopimelate: step 1/1. In terms of biological role, catalyzes the stereoinversion of LL-2,6-diaminopimelate (L,L-DAP) to meso-diaminopimelate (meso-DAP), a precursor of L-lysine and an essential component of the bacterial peptidoglycan. In Nostoc sp. (strain PCC 7120 / SAG 25.82 / UTEX 2576), this protein is Diaminopimelate epimerase 1.